A 427-amino-acid chain; its full sequence is 3-phosphoshikimate 1-carboxyvinyltransferase (427 aa).

3-phosphoshikimate-binding residues include Lys-20, Ser-21, and Arg-25. Lys-20 serves as a coordination point for phosphoenolpyruvate. 2 residues coordinate phosphoenolpyruvate: Gly-92 and Arg-120. The 3-phosphoshikimate site is built by Ser-166, Gln-168, Asp-312, and Lys-339. Gln-168 lines the phosphoenolpyruvate pocket. Asp-312 (proton acceptor) is an active-site residue. Phosphoenolpyruvate is bound by residues Arg-343 and Arg-385.

Belongs to the EPSP synthase family. In terms of assembly, monomer.

The protein resides in the cytoplasm. The enzyme catalyses 3-phosphoshikimate + phosphoenolpyruvate = 5-O-(1-carboxyvinyl)-3-phosphoshikimate + phosphate. It functions in the pathway metabolic intermediate biosynthesis; chorismate biosynthesis; chorismate from D-erythrose 4-phosphate and phosphoenolpyruvate: step 6/7. Its function is as follows. Catalyzes the transfer of the enolpyruvyl moiety of phosphoenolpyruvate (PEP) to the 5-hydroxyl of shikimate-3-phosphate (S3P) to produce enolpyruvyl shikimate-3-phosphate and inorganic phosphate. The chain is 3-phosphoshikimate 1-carboxyvinyltransferase from Streptococcus pyogenes serotype M28 (strain MGAS6180).